The chain runs to 321 residues: Olfactory receptor 5P60 (321 aa).

At 1 to 28 (MAFLHNGNHTAVTEFILLGLTDDPVLRI) the chain is on the extracellular side. An N-linked (GlcNAc...) asparagine glycan is attached at Asn8. A helical membrane pass occupies residues 29 to 49 (VLFTIILCIYLVTVSGNLSTI). Residues 50-57 (LLIRVSSQ) lie on the Cytoplasmic side of the membrane. A helical membrane pass occupies residues 58 to 78 (LHHPMYFFLSHLASADIGYSS). At 79–102 (SVTPNMLVNFLVKQNTISYIGCSI) the chain is on the extracellular side. A disulfide bond links Cys100 and Cys192. A helical transmembrane segment spans residues 103–123 (QFGSAAFFGGLECFLLAVMAY). Residues 124-136 (DRFVAICNPLLYS) lie on the Cytoplasmic side of the membrane. A helical membrane pass occupies residues 137-157 (TKMSTQVCVQLVVGSYIGGFL). The Extracellular segment spans residues 158-199 (NASFATVSFLFLFFCGPNIINHFFCDFAPLIELSCSDVRISV). Residues 200–220 (LVTSFSAGTVTMLTVLVIAIS) traverse the membrane as a helical segment. Residues 221–240 (YTYILITILKMRSTEGRHKA) lie on the Cytoplasmic side of the membrane. The helical transmembrane segment at 241–261 (FSTCTSHLTAVSLFYGTITFI) threads the bilayer. Topologically, residues 262-274 (YVMPKSRYSTDQN) are extracellular. Residues 275 to 295 (KVVSVFYMVVIPMLNPLIYSL) form a helical membrane-spanning segment. The Cytoplasmic segment spans residues 296–321 (RNNEIKGALRRHLGKKIFSQSNILFY).

This sequence belongs to the G-protein coupled receptor 1 family.

It localises to the cell membrane. Its function is as follows. Potential odorant receptor. In Mus musculus (Mouse), this protein is Olfactory receptor 5P60.